The chain runs to 403 residues: Argininosuccinate synthase (403 aa).

ATP is bound at residue 10–18 (AYSGGLDTS). Tyr-87 lines the L-citrulline pocket. Residue Gly-117 participates in ATP binding. L-aspartate-binding residues include Thr-119, Asn-123, and Asp-124. Asn-123 serves as a coordination point for L-citrulline. Arg-127, Ser-175, Glu-260, and Tyr-272 together coordinate L-citrulline.

This sequence belongs to the argininosuccinate synthase family. Type 1 subfamily. As to quaternary structure, homotetramer.

Its subcellular location is the cytoplasm. The catalysed reaction is L-citrulline + L-aspartate + ATP = 2-(N(omega)-L-arginino)succinate + AMP + diphosphate + H(+). Its pathway is amino-acid biosynthesis; L-arginine biosynthesis; L-arginine from L-ornithine and carbamoyl phosphate: step 2/3. The chain is Argininosuccinate synthase from Bacillus subtilis (strain 168).